A 130-amino-acid chain; its full sequence is uncharacterized protein (130 aa).

This is an uncharacterized protein from Bacillus subtilis (strain 168).